Consider the following 595-residue polypeptide: Elongation factor 4 (595 aa).

Residues 2–184 form the tr-type G domain; sequence KNIRNFSIIA…QIVERIPTPK (183 aa). GTP contacts are provided by residues 14-19 and 131-134; these read DHGKST and NKID.

Belongs to the TRAFAC class translation factor GTPase superfamily. Classic translation factor GTPase family. LepA subfamily.

It localises to the cell inner membrane. The enzyme catalyses GTP + H2O = GDP + phosphate + H(+). In terms of biological role, required for accurate and efficient protein synthesis under certain stress conditions. May act as a fidelity factor of the translation reaction, by catalyzing a one-codon backward translocation of tRNAs on improperly translocated ribosomes. Back-translocation proceeds from a post-translocation (POST) complex to a pre-translocation (PRE) complex, thus giving elongation factor G a second chance to translocate the tRNAs correctly. Binds to ribosomes in a GTP-dependent manner. This chain is Elongation factor 4, found in Vesicomyosocius okutanii subsp. Calyptogena okutanii (strain HA).